A 1187-amino-acid chain; its full sequence is DNA-directed RNA polymerase subunit beta (1187 aa).

This sequence belongs to the RNA polymerase beta chain family. As to quaternary structure, the RNAP catalytic core consists of 2 alpha, 1 beta, 1 beta' and 1 omega subunit. When a sigma factor is associated with the core the holoenzyme is formed, which can initiate transcription.

It catalyses the reaction RNA(n) + a ribonucleoside 5'-triphosphate = RNA(n+1) + diphosphate. Functionally, DNA-dependent RNA polymerase catalyzes the transcription of DNA into RNA using the four ribonucleoside triphosphates as substrates. The chain is DNA-directed RNA polymerase subunit beta from Streptococcus mutans serotype c (strain ATCC 700610 / UA159).